Here is a 343-residue protein sequence, read N- to C-terminus: Dipeptide transport system permease protein DppC (343 aa).

A run of 5 helical transmembrane segments spans residues 44–64 (LVAMWIIAITLVFSVISAFVV), 144–164 (LIIALAAALIDLVIGVTYGII), 195–215 (LALLLGQGISSIIIAIGLFAW), 259–279 (GVIVVQIMFDIPSMIMYEAVL), and 309–329 (FQLIIPAIVLSVLSLTFIFFG). Residues 140–329 (LRISLIIALA…VLSLTFIFFG (190 aa)) enclose the ABC transmembrane type-1 domain.

The protein belongs to the binding-protein-dependent transport system permease family. OppBC subfamily. As to quaternary structure, the complex is composed of two ATP-binding proteins (DppD and DppF), two transmembrane proteins (DppB and DppC) and a solute-binding protein (DppA).

The protein localises to the cell membrane. Functionally, part of the ABC transporter DppABCDF involved in dipeptide transport. Responsible for the translocation of the substrate across the membrane. The polypeptide is Dipeptide transport system permease protein DppC (Lactococcus lactis subsp. cremoris (strain MG1363)).